We begin with the raw amino-acid sequence, 433 residues long: Histidinol dehydrogenase (433 aa).

NAD(+) is bound by residues Tyr129, Gln191, and Asn214. Residues Ser237, Gln259, and His262 each contribute to the substrate site. Zn(2+) contacts are provided by Gln259 and His262. Active-site proton acceptor residues include Glu326 and His327. 4 residues coordinate substrate: His327, Asp360, Glu414, and His419. Asp360 contributes to the Zn(2+) binding site. Position 419 (His419) interacts with Zn(2+).

This sequence belongs to the histidinol dehydrogenase family. Zn(2+) is required as a cofactor.

It catalyses the reaction L-histidinol + 2 NAD(+) + H2O = L-histidine + 2 NADH + 3 H(+). Its pathway is amino-acid biosynthesis; L-histidine biosynthesis; L-histidine from 5-phospho-alpha-D-ribose 1-diphosphate: step 9/9. Functionally, catalyzes the sequential NAD-dependent oxidations of L-histidinol to L-histidinaldehyde and then to L-histidine. In Methanosarcina barkeri (strain Fusaro / DSM 804), this protein is Histidinol dehydrogenase.